The chain runs to 554 residues: Alpha-taxilin (554 aa).

The interval 1 to 66 (MKNQDKKNGP…ARAKAAQPGA (66 aa)) is disordered. Ser71 carries the phosphoserine modification. Positions 85–166 (YCVDNNQGGP…RRPQEKKKAK (82 aa)) are disordered. Over residues 91–103 (QGGPAEEGAQGEP) the composition is skewed to low complexity. Over residues 143–158 (EEIRASDEVGDRDHRR) the composition is skewed to basic and acidic residues. Positions 186-491 (EEKLAALCKK…NKRVQDLTAG (306 aa)) form a coiled coil. Residues 492–554 (GITDIGSERR…GPGEPTPATA (63 aa)) form a disordered region. A phosphoserine mark is found at Ser515 and Ser523.

This sequence belongs to the taxilin family. Binds to the C-terminal coiled coil region of syntaxin family members STX1A, STX3A and STX4A, but not when these proteins are complexed with SNAP25, VAMP2 or STXBP1, suggesting that it interacts with syntaxins that do not form the SNARE complex.

Its function is as follows. May be involved in intracellular vesicle traffic and potentially in calcium-dependent exocytosis in neuroendocrine cells. The chain is Alpha-taxilin (Txlna) from Mus musculus (Mouse).